We begin with the raw amino-acid sequence, 446 residues long: Maltoporin (446 aa).

Positions 1 to 25 are cleaved as a signal peptide; the sequence is MMTTLRKLPLAVAVAAGMMSVQAMA.

It belongs to the porin LamB (TC 1.B.3) family. In terms of assembly, homotrimer formed of three 18-stranded antiparallel beta-barrels, containing three independent channels.

It localises to the cell outer membrane. It carries out the reaction beta-maltose(in) = beta-maltose(out). Functionally, involved in the transport of maltose and maltodextrins. In Escherichia fergusonii (strain ATCC 35469 / DSM 13698 / CCUG 18766 / IAM 14443 / JCM 21226 / LMG 7866 / NBRC 102419 / NCTC 12128 / CDC 0568-73), this protein is Maltoporin.